A 283-amino-acid polypeptide reads, in one-letter code: Thymidylate synthase (283 aa).

DUMP is bound at residue arginine 22. The active-site Nucleophile is cysteine 160. DUMP is bound by residues 180–183 (RSCD), asparagine 191, and 221–223 (HIY). Aspartate 183 contributes to the (6R)-5,10-methylene-5,6,7,8-tetrahydrofolate binding site. Residue serine 282 participates in (6R)-5,10-methylene-5,6,7,8-tetrahydrofolate binding.

The protein belongs to the thymidylate synthase family. Bacterial-type ThyA subfamily. As to quaternary structure, homodimer.

Its subcellular location is the cytoplasm. It catalyses the reaction dUMP + (6R)-5,10-methylene-5,6,7,8-tetrahydrofolate = 7,8-dihydrofolate + dTMP. Its pathway is pyrimidine metabolism; dTTP biosynthesis. Its function is as follows. Catalyzes the reductive methylation of 2'-deoxyuridine-5'-monophosphate (dUMP) to 2'-deoxythymidine-5'-monophosphate (dTMP) while utilizing 5,10-methylenetetrahydrofolate (mTHF) as the methyl donor and reductant in the reaction, yielding dihydrofolate (DHF) as a by-product. This enzymatic reaction provides an intracellular de novo source of dTMP, an essential precursor for DNA biosynthesis. The sequence is that of Thymidylate synthase from Aliivibrio fischeri (strain ATCC 700601 / ES114) (Vibrio fischeri).